The following is a 262-amino-acid chain: MHRLVVLLVCLAVGSACAGTVGVSNGDPFEREGRIVGGEDTTIGAHPYQVSLQTKSGSHFCGGSLINEDTVVTAAHCLVGRKVSKVFVRLGSTLYNEGGIVVAVRELAYNEDYNSKTMEYDVGILKLDEKVKETENIRYIELATETPPTGTTAVVTGWGSKCYFWCMTLPKTLQEVYVNIVDWKTCASDEYKYGEIIYDSMVCAYEKKKDACQGDSGGPLAVGNTLVGIVSWGYACASNLLPGVYSDVPALRKWILNASETL.

Residues 1 to 19 (MHRLVVLLVCLAVGSACAG) form the signal peptide. Residues 20 to 34 (TVGVSNGDPFEREGR) constitute a propeptide, activation peptide. In terms of domain architecture, Peptidase S1 spans 35–260 (IVGGEDTTIG…LRKWILNASE (226 aa)). The cysteines at positions 61 and 77 are disulfide-linked. Active-site charge relay system residues include His-76 and Asp-121. 2 cysteine pairs are disulfide-bonded: Cys-186/Cys-203 and Cys-212/Cys-236. The active-site Charge relay system is the Ser-216.

Belongs to the peptidase S1 family.

It is found in the secreted. The protein resides in the extracellular space. The catalysed reaction is Preferential cleavage: Arg-|-Xaa, Lys-|-Xaa.. The protein is Trypsin theta (thetaTry) of Drosophila melanogaster (Fruit fly).